The following is a 330-amino-acid chain: Ferredoxin--NADP reductase (330 aa).

FAD-binding residues include threonine 18, glutamate 37, glutamine 45, tyrosine 50, valine 90, phenylalanine 124, aspartate 286, and threonine 327.

Belongs to the ferredoxin--NADP reductase type 2 family. In terms of assembly, homodimer. FAD is required as a cofactor.

The catalysed reaction is 2 reduced [2Fe-2S]-[ferredoxin] + NADP(+) + H(+) = 2 oxidized [2Fe-2S]-[ferredoxin] + NADPH. In Halalkalibacterium halodurans (strain ATCC BAA-125 / DSM 18197 / FERM 7344 / JCM 9153 / C-125) (Bacillus halodurans), this protein is Ferredoxin--NADP reductase.